The following is a 75-amino-acid chain: Alpha-elapitoxin-Bc2a (75 aa).

A signal peptide spans 1-2; it reads YT. Disulfide bonds link Cys-5–Cys-24, Cys-17–Cys-45, Cys-30–Cys-34, Cys-49–Cys-60, and Cys-61–Cys-66.

This sequence belongs to the three-finger toxin family. Long-chain subfamily. Type II alpha-neurotoxin sub-subfamily. Monomer in solution, homodimer in crystal state. Expressed by the venom gland.

It localises to the secreted. Its function is as follows. Binds to muscular and neuronal nicotinic acetylcholine receptor (nAChR) and inhibits acetylcholine from binding to the receptor, thereby impairing neuromuscular and neuronal transmission. Reversibly blocks chick and mouse muscle nicotinic acetylcholine receptors. Blocks muscle type nAChR with an IC(50)=30 nM, when heterologously expressed in oocytes. Also binds with high affinity to alpha-7/CHRNA7 nAChRs. In addition, shows a weak inhibition of neuronal alpha-3-beta-2/CHRNA3-CHRNB2 nAChR (IC(50)=2.9 uM). Selectively binds to alpha-1-delta subunit interface of the mouse muscle nicotinic acetylcholine receptor, with a 10-fold higher affinity for the adult than for the fetal receptors. In vivo, when intraperitoneally injected into mice, causes flaccid paralysis and respiratory distress, followed by death within 2-4 hours. The protein is Alpha-elapitoxin-Bc2a of Bungarus candidus (Malayan krait).